The following is a 214-amino-acid chain: Adenylate kinase (214 aa).

Gly10–Thr15 contributes to the ATP binding site. Positions Ser30 to Val59 are NMP. AMP contacts are provided by residues Thr31, Arg36, Gln57–Val59, Gly85–Arg88, and Gln92. The interval Gly122–Asp159 is LID. Residues Arg123 and Thr132–Tyr133 contribute to the ATP site. The AMP site is built by Arg156 and Arg167. ATP is bound at residue Lys200.

Belongs to the adenylate kinase family. As to quaternary structure, monomer.

It is found in the cytoplasm. The catalysed reaction is AMP + ATP = 2 ADP. The protein operates within purine metabolism; AMP biosynthesis via salvage pathway; AMP from ADP: step 1/1. In terms of biological role, catalyzes the reversible transfer of the terminal phosphate group between ATP and AMP. Plays an important role in cellular energy homeostasis and in adenine nucleotide metabolism. The sequence is that of Adenylate kinase from Vibrio vulnificus (strain CMCP6).